Here is a 279-residue protein sequence, read N- to C-terminus: MTKADQIFKANIQKIINEGSLSEQARPKYKDGRTAHSKYITGAFAEYDLAKGEFPITTLRPIPIKSAIKELFWIYQDQSNSLDVLEAKYNVHYWNEWEVDQTRTIGQRYGAVVKKHDIISKILKQLAENPWNRRNVISLWDYEAFEETKGLLPCAFQIMFDVRRVGEDLYLDASLTQRSNDILVAHHINAMQYVALQMMIAKHFGWKIGKFFYFVNNLHIYDNQFDQAQELLKRQPVASQPKLVLNVPDGTNFFDIKPDDFELQNYDPVKPQLHFDLAI.

133–134 contacts dUMP; that stretch reads RR. Cysteine 154 acts as the Nucleophile in catalysis. Residues 178-181, asparagine 189, and 219-221 contribute to the dUMP site; these read RSND and HIY. Aspartate 181 is a binding site for (6R)-5,10-methylene-5,6,7,8-tetrahydrofolate. Position 278 (alanine 278) interacts with (6R)-5,10-methylene-5,6,7,8-tetrahydrofolate.

This sequence belongs to the thymidylate synthase family. Bacterial-type ThyA subfamily. In terms of assembly, homodimer.

Its subcellular location is the cytoplasm. The catalysed reaction is dUMP + (6R)-5,10-methylene-5,6,7,8-tetrahydrofolate = 7,8-dihydrofolate + dTMP. The protein operates within pyrimidine metabolism; dTTP biosynthesis. In terms of biological role, catalyzes the reductive methylation of 2'-deoxyuridine-5'-monophosphate (dUMP) to 2'-deoxythymidine-5'-monophosphate (dTMP) while utilizing 5,10-methylenetetrahydrofolate (mTHF) as the methyl donor and reductant in the reaction, yielding dihydrofolate (DHF) as a by-product. This enzymatic reaction provides an intracellular de novo source of dTMP, an essential precursor for DNA biosynthesis. This is Thymidylate synthase from Streptococcus pyogenes serotype M6 (strain ATCC BAA-946 / MGAS10394).